The following is a 500-amino-acid chain: Cytochrome P450 2D14 (500 aa).

Cys-446 is a binding site for heme.

It belongs to the cytochrome P450 family. Heme serves as cofactor.

The protein localises to the endoplasmic reticulum membrane. It localises to the microsome membrane. The catalysed reaction is an organic molecule + reduced [NADPH--hemoprotein reductase] + O2 = an alcohol + oxidized [NADPH--hemoprotein reductase] + H2O + H(+). Cytochromes P450 are a group of heme-thiolate monooxygenases. In liver microsomes, this enzyme is involved in an NADPH-dependent electron transport pathway. It oxidizes a variety of structurally unrelated compounds, including steroids, fatty acids, and xenobiotics. The chain is Cytochrome P450 2D14 (CYP2D14) from Bos taurus (Bovine).